The primary structure comprises 137 residues: Large ribosomal subunit protein eL28 (137 aa).

S2 carries the N-acetylserine modification. Residues K58 and K65 each participate in a glycyl lysine isopeptide (Lys-Gly) (interchain with G-Cter in SUMO2) cross-link. Residue S115 is modified to Phosphoserine.

This sequence belongs to the eukaryotic ribosomal protein eL28 family. Component of the large ribosomal subunit.

It localises to the cytoplasm. In terms of biological role, component of the large ribosomal subunit. The ribosome is a large ribonucleoprotein complex responsible for the synthesis of proteins in the cell. This is Large ribosomal subunit protein eL28 (Rpl28) from Mus musculus (Mouse).